A 631-amino-acid chain; its full sequence is Phosphomethylpyrimidine synthase (631 aa).

Residues Asn-239, Met-268, Tyr-297, His-333, Ser-353 to Gly-355, Asp-394 to Arg-397, and Glu-433 each bind substrate. His-437 contacts Zn(2+). A substrate-binding site is contributed by Tyr-460. His-501 is a Zn(2+) binding site. Cys-581, Cys-584, and Cys-589 together coordinate [4Fe-4S] cluster.

It belongs to the ThiC family. As to quaternary structure, homodimer. [4Fe-4S] cluster serves as cofactor.

It carries out the reaction 5-amino-1-(5-phospho-beta-D-ribosyl)imidazole + S-adenosyl-L-methionine = 4-amino-2-methyl-5-(phosphooxymethyl)pyrimidine + CO + 5'-deoxyadenosine + formate + L-methionine + 3 H(+). It participates in cofactor biosynthesis; thiamine diphosphate biosynthesis. Its function is as follows. Catalyzes the synthesis of the hydroxymethylpyrimidine phosphate (HMP-P) moiety of thiamine from aminoimidazole ribotide (AIR) in a radical S-adenosyl-L-methionine (SAM)-dependent reaction. This Salmonella enteritidis PT4 (strain P125109) protein is Phosphomethylpyrimidine synthase.